Reading from the N-terminus, the 286-residue chain is Polyamine aminopropyltransferase (286 aa).

Residues 3 to 240 (DLWYSESHAD…GHWLFGFASK (238 aa)) enclose the PABS domain. Gln-32 is an S-methyl-5'-thioadenosine binding site. Spermidine-binding residues include His-63 and Asp-87. Residues Glu-107 and 139–140 (DG) contribute to the S-methyl-5'-thioadenosine site. Asp-158 acts as the Proton acceptor in catalysis. A spermidine-binding site is contributed by 158–161 (DSTD). An S-methyl-5'-thioadenosine-binding site is contributed by Pro-165.

Belongs to the spermidine/spermine synthase family. In terms of assembly, homodimer or homotetramer.

The protein resides in the cytoplasm. It catalyses the reaction S-adenosyl 3-(methylsulfanyl)propylamine + putrescine = S-methyl-5'-thioadenosine + spermidine + H(+). The protein operates within amine and polyamine biosynthesis; spermidine biosynthesis; spermidine from putrescine: step 1/1. Functionally, catalyzes the irreversible transfer of a propylamine group from the amino donor S-adenosylmethioninamine (decarboxy-AdoMet) to putrescine (1,4-diaminobutane) to yield spermidine. The chain is Polyamine aminopropyltransferase from Clostridium acetobutylicum (strain ATCC 824 / DSM 792 / JCM 1419 / IAM 19013 / LMG 5710 / NBRC 13948 / NRRL B-527 / VKM B-1787 / 2291 / W).